Here is a 20-residue protein sequence, read N- to C-terminus: LNPFRWVINKYREWKNKKDS.

At serine 20 the chain carries Serine amide.

Expressed by the venom gland.

It is found in the secreted. The protein is Short cationic peptide-6a of Cupiennius salei (American wandering spider).